Reading from the N-terminus, the 398-residue chain is Cell division protein FtsZ (398 aa).

Residues 21-25 (GGGGN), 108-110 (GTG), Glu-139, Arg-143, and Asp-187 each bind GTP.

It belongs to the FtsZ family. As to quaternary structure, homodimer. Polymerizes to form a dynamic ring structure in a strictly GTP-dependent manner. Interacts directly with several other division proteins.

It localises to the cytoplasm. In terms of biological role, essential cell division protein that forms a contractile ring structure (Z ring) at the future cell division site. The regulation of the ring assembly controls the timing and the location of cell division. One of the functions of the FtsZ ring is to recruit other cell division proteins to the septum to produce a new cell wall between the dividing cells. Binds GTP and shows GTPase activity. This chain is Cell division protein FtsZ, found in Pseudomonas putida (strain ATCC 47054 / DSM 6125 / CFBP 8728 / NCIMB 11950 / KT2440).